Here is a 193-residue protein sequence, read N- to C-terminus: Ribosomal RNA small subunit methyltransferase G (193 aa).

Residues Gly-72, Phe-77, 123–124, and Arg-137 each bind S-adenosyl-L-methionine; that span reads IE.

It belongs to the methyltransferase superfamily. RNA methyltransferase RsmG family.

The protein resides in the cytoplasm. It carries out the reaction guanosine(527) in 16S rRNA + S-adenosyl-L-methionine = N(7)-methylguanosine(527) in 16S rRNA + S-adenosyl-L-homocysteine. Its function is as follows. Specifically methylates the N7 position of guanine in position 527 of 16S rRNA. In Wolinella succinogenes (strain ATCC 29543 / DSM 1740 / CCUG 13145 / JCM 31913 / LMG 7466 / NCTC 11488 / FDC 602W) (Vibrio succinogenes), this protein is Ribosomal RNA small subunit methyltransferase G.